A 291-amino-acid chain; its full sequence is Lys-63-specific deubiquitinase BRCC36-like (291 aa).

The region spanning 12–179 (VYLESDAFLV…YTCFQSVQAS (168 aa)) is the MPN domain. Positions 122, 124, and 135 each coordinate Zn(2+). The JAMM motif motif lies at 122–135 (HSHPHITVWPSHVD). Residues 259–286 (LQWLEDRLEQNQQRLQELEQEKEDLMEE) adopt a coiled-coil conformation.

The protein belongs to the peptidase M67A family. BRCC36 subfamily.

Metalloprotease that specifically cleaves 'Lys-63'-linked polyubiquitin chains. The protein is Lys-63-specific deubiquitinase BRCC36-like of Mus musculus (Mouse).